Here is a 67-residue protein sequence, read N- to C-terminus: Large ribosomal subunit protein bL35 (67 aa).

Positions 1–11 (MPKLKTRKAAA) are enriched in basic residues. The segment at 1–22 (MPKLKTRKAAAKRFEATGSGKK) is disordered.

The protein belongs to the bacterial ribosomal protein bL35 family.

This chain is Large ribosomal subunit protein bL35, found in Microcystis aeruginosa (strain NIES-843 / IAM M-2473).